The chain runs to 491 residues: MANYFNTLNLRQQLAQLGKCRFMGRDEFADGASYLQGKKVVIVGCGAQGLNQGLNMRDSGLDIAYALRKEAIAEKRASWRKATENGFKVGTYEELIPQADLVVNLTPDKQHSDVVRSVQPLMKDGAALGYSHGFNIVEVGEQIRKDITVVMVAPKCPGTEVREEYKRGFGVPTLIAVHPENDPKGEGMAIAKAWAAATGGHRAGVLESSFVAEVKSDLMGEQTILCGMLQAGSLLCFDKLVEEGTDPAYAEKLIQYGWETITEALKQGGITLMMDRLSNPAKLRAYALSEQLKTIMAPLFQKHMDDIISGEFSSGMMADWANDDKKLLTWREETGKTAFETAPQYEGKIGEQEYFDKGVLMIAMVKAGVELAFETMVDSGIIEESAYYESLHELPLIANTIARKRLYEMNVVISDTAEYGNYLFSYACVPLLKAFMTEIQPGDLGKAIAEGAVDNAQLRDVNEAIRGHAIEKVGQKLRGYMTDMKRIAVAG.

The KARI N-terminal Rossmann domain occupies alanine 15–serine 208. Residues cysteine 45–glutamine 48, arginine 68, arginine 76, serine 78, and aspartate 108–glutamine 110 contribute to the NADP(+) site. Histidine 132 is an active-site residue. Position 158 (glycine 158) interacts with NADP(+). 2 consecutive KARI C-terminal knotted domains span residues serine 209–glutamine 344 and tyrosine 345–methionine 484. Residues aspartate 217, glutamate 221, glutamate 389, and glutamate 393 each coordinate Mg(2+). Residue serine 414 coordinates substrate.

This sequence belongs to the ketol-acid reductoisomerase family. The cofactor is Mg(2+).

It carries out the reaction (2R)-2,3-dihydroxy-3-methylbutanoate + NADP(+) = (2S)-2-acetolactate + NADPH + H(+). The catalysed reaction is (2R,3R)-2,3-dihydroxy-3-methylpentanoate + NADP(+) = (S)-2-ethyl-2-hydroxy-3-oxobutanoate + NADPH + H(+). It participates in amino-acid biosynthesis; L-isoleucine biosynthesis; L-isoleucine from 2-oxobutanoate: step 2/4. The protein operates within amino-acid biosynthesis; L-valine biosynthesis; L-valine from pyruvate: step 2/4. Functionally, involved in the biosynthesis of branched-chain amino acids (BCAA). Catalyzes an alkyl-migration followed by a ketol-acid reduction of (S)-2-acetolactate (S2AL) to yield (R)-2,3-dihydroxy-isovalerate. In the isomerase reaction, S2AL is rearranged via a Mg-dependent methyl migration to produce 3-hydroxy-3-methyl-2-ketobutyrate (HMKB). In the reductase reaction, this 2-ketoacid undergoes a metal-dependent reduction by NADPH to yield (R)-2,3-dihydroxy-isovalerate. This Citrobacter koseri (strain ATCC BAA-895 / CDC 4225-83 / SGSC4696) protein is Ketol-acid reductoisomerase (NADP(+)).